Here is a 388-residue protein sequence, read N- to C-terminus: Na(+)/H(+) antiporter NhaA (388 aa).

11 consecutive transmembrane segments (helical) span residues 14-34 (GGII…MGAT), 59-79 (MLLW…GLEV), 95-115 (VFPV…YLAF), 125-145 (GWAI…ALLG), 154-174 (IFLM…IALF), 179-199 (LSIV…LLNL), 219-239 (VLKS…FIPL), 254-274 (ILHP…NAGV), 292-312 (IIAG…WLAL), 328-348 (IMAV…IASL), and 356-376 (ALIN…AVVG).

This sequence belongs to the NhaA Na(+)/H(+) (TC 2.A.33) antiporter family.

Its subcellular location is the cell inner membrane. The enzyme catalyses Na(+)(in) + 2 H(+)(out) = Na(+)(out) + 2 H(+)(in). Functionally, na(+)/H(+) antiporter that extrudes sodium in exchange for external protons. This is Na(+)/H(+) antiporter NhaA from Salmonella arizonae (strain ATCC BAA-731 / CDC346-86 / RSK2980).